The primary structure comprises 249 residues: Very-long-chain (3R)-3-hydroxyacyl-CoA dehydratase 1 (249 aa).

A disordered region spans residues 1 to 22 (MASSEEDGTNGGASEAGEEKEA). Residues 1 to 36 (MASSEEDGTNGGASEAGEEKEAPGRRRRLGLLATVW) are Cytoplasmic-facing. Residues 37–56 (LTFYNIAMTAGWLVLAIAMV) traverse the membrane as a helical segment. The Lumenal portion of the chain corresponds to 57–75 (RFYMEKGTHKGLYKSIQKT). The chain crosses the membrane as a helical span at residues 76–92 (LKFFQTFALLEIVHCLI). Residues 93–102 (GIVPTSVIVA) lie on the Cytoplasmic side of the membrane. A helical transmembrane segment spans residues 103 to 120 (GVQVSSRIFMVWLITHSI). At 121–126 (KPIQNE) the chain is on the lumenal side. Residues 127–141 (ESVVLFLVAWTVTEI) form a helical membrane-spanning segment. Residues 142–164 (TRYSFYTFSLLDHLPYFIKWARY) lie on the Cytoplasmic side of the membrane. A helical membrane pass occupies residues 165–182 (NFFIILYPVGVVGELLTI). Residues Tyr171 and Glu178 contribute to the active site. Residues 183 to 212 (YAALPYVKKTGMFSIRLPNKYNVSFDYYYF) lie on the Lumenal side of the membrane. Asn204 carries an N-linked (GlcNAc...) asparagine glycan. A helical transmembrane segment spans residues 213–230 (LLITMASYIPLFPQLYFH). At 231–249 (MLRQRRKVLHGEVIVEKDD) the chain is on the cytoplasmic side.

Belongs to the very long-chain fatty acids dehydratase HACD family. As to quaternary structure, may interact with enzymes of the ELO family (including ELOVL1); with those enzymes that mediate condensation, the first of the four steps of the reaction cycle responsible for fatty acids elongation, may be part of a larger fatty acids elongase complex. Interacts with TECR. Skeletal muscle.

It localises to the endoplasmic reticulum membrane. The enzyme catalyses a very-long-chain (3R)-3-hydroxyacyl-CoA = a very-long-chain (2E)-enoyl-CoA + H2O. It catalyses the reaction (3R)-hydroxyhexadecanoyl-CoA = (2E)-hexadecenoyl-CoA + H2O. It carries out the reaction (3R)-hydroxyoctadecanoyl-CoA = (2E)-octadecenoyl-CoA + H2O. The catalysed reaction is (3R)-hydroxyeicosanoyl-CoA = (2E)-eicosenoyl-CoA + H2O. The enzyme catalyses (3R)-hydroxydocosanoyl-CoA = (2E)-docosenoyl-CoA + H2O. It catalyses the reaction (3R)-hydroxytetracosanoyl-CoA = (2E)-tetracosenoyl-CoA + H2O. It carries out the reaction (3R)-hydroxyhexacosanoyl-CoA = (2E)-hexacosenoyl-CoA + H2O. Its pathway is lipid metabolism; fatty acid biosynthesis. Functionally, catalyzes the third of the four reactions of the long-chain fatty acids elongation cycle. This endoplasmic reticulum-bound enzymatic process, allows the addition of two carbons to the chain of long- and very long-chain fatty acids/VLCFAs per cycle. This enzyme catalyzes the dehydration of the 3-hydroxyacyl-CoA intermediate into trans-2,3-enoyl-CoA, within each cycle of fatty acid elongation. Thereby, it participates in the production of VLCFAs of different chain lengths that are involved in multiple biological processes as precursors of membrane lipids and lipid mediators. In Canis lupus familiaris (Dog), this protein is Very-long-chain (3R)-3-hydroxyacyl-CoA dehydratase 1 (HACD1).